We begin with the raw amino-acid sequence, 213 residues long: Putative manganese efflux pump MntP (213 aa).

Transmembrane regions (helical) follow at residues 3 to 23 (ILSI…VSVA), 36 to 56 (ALKV…IGWG), 67 to 87 (AFDH…MIFE), 130 to 150 (LAIA…FLGI), 152 to 172 (IVQT…LGVI), and 187 to 207 (IVGG…HTGI).

Belongs to the MntP (TC 9.B.29) family.

It localises to the cell membrane. Its function is as follows. Probably functions as a manganese efflux pump. The protein is Putative manganese efflux pump MntP of Clostridium perfringens (strain SM101 / Type A).